The following is a 97-amino-acid chain: Putative membrane protein insertion efficiency factor (97 aa).

The segment at 68–97 is disordered; that stretch reads VPGTELNTAPRSGQACNPTESTHSTTQTRH. Polar residues predominate over residues 72-97; that stretch reads ELNTAPRSGQACNPTESTHSTTQTRH.

It belongs to the UPF0161 family.

The protein localises to the cell inner membrane. Its function is as follows. Could be involved in insertion of integral membrane proteins into the membrane. This chain is Putative membrane protein insertion efficiency factor, found in Marinobacter nauticus (strain ATCC 700491 / DSM 11845 / VT8) (Marinobacter aquaeolei).